Reading from the N-terminus, the 325-residue chain is Phage-like element PBSX protein XkdQ (325 aa).

The protein to B.subtilis YqbQ.

The sequence is that of Phage-like element PBSX protein XkdQ (xkdQ) from Bacillus subtilis (strain 168).